We begin with the raw amino-acid sequence, 478 residues long: BTB/POZ domain-containing protein 17 (478 aa).

An N-terminal signal peptide occupies residues 1–28 (MPRRGYSKPGSWGSFWAMLTLVGLVTHA). N61, N100, and N195 each carry an N-linked (GlcNAc...) asparagine glycan. One can recognise a BTB domain in the interval 63–132 (SDVVLRVQAA…LYCGELTVLL (70 aa)). The BACK domain occupies 169 to 269 (AVGWYHYAVG…IPPAQLFQLQ (101 aa)).

The protein resides in the secreted. The sequence is that of BTB/POZ domain-containing protein 17 (BTBD17) from Homo sapiens (Human).